A 578-amino-acid chain; its full sequence is Arginine--tRNA ligase (578 aa).

Positions 123–133 match the 'HIGH' region motif; sequence PNIAKEMHVGH.

It belongs to the class-I aminoacyl-tRNA synthetase family. In terms of assembly, monomer.

It is found in the cytoplasm. The enzyme catalyses tRNA(Arg) + L-arginine + ATP = L-arginyl-tRNA(Arg) + AMP + diphosphate. This is Arginine--tRNA ligase from Baumannia cicadellinicola subsp. Homalodisca coagulata.